The chain runs to 2089 residues: Rho GTPase-activating protein 32 (2089 aa).

The segment at 24–52 (TQLTDGDEEEREESFRKMKSSIHSEEDDF) is disordered. Positions 131–245 (GSIQLSLSEE…LTWMEIDNKG (115 aa)) constitute a PX; atypical domain. An SH3 domain is found at 259-321 (PAVGAAHVIK…PGHCVELINQ (63 aa)). The Rho-GAP domain maps to 372–567 (CDLGEHLLNS…FILNHVDVLF (196 aa)). Residues Ser-706, Ser-709, Ser-732, and Ser-738 each carry the phosphoserine modification. A compositionally biased stretch (basic and acidic residues) spans 828–837 (KLSPSKKDAE). The disordered stretch occupies residues 828-858 (KLSPSKKDAEAGGSQSQTPGSTASSEPVSPV). Residues 840–854 (GSQSQTPGSTASSEP) show a composition bias toward polar residues. Phosphoserine occurs at positions 852, 856, 892, and 952. Disordered stretches follow at residues 955 to 1037 (QLQL…PPPP), 1119 to 1141 (CNQP…TDSG), and 1154 to 1197 (LHRN…SVST). Composition is skewed to polar residues over residues 998-1014 (LSSQ…QTGA) and 1132-1141 (PTQSNTTDSG). The segment covering 1175–1191 (DSEKSDDHGSFPEDHAG) has biased composition (basic and acidic residues). Ser-1206 carries the phosphoserine modification. The tract at residues 1221-1368 (GTSVDKPHHS…GDPAPIFLSD (148 aa)) is disordered. Residues 1225–1235 (DKPHHSSELTD) are compositionally biased toward basic and acidic residues. The segment covering 1262-1275 (TATMAYMMATPARA) has biased composition (low complexity). The tract at residues 1395–1714 (RAPPLHLRAE…YNYAGLPPRP (320 aa)) is interaction with GAB2. Arg-1526 and Arg-1536 each carry asymmetric dimethylarginine. Ser-1588 is modified (phosphoserine). Residues 1688–2089 (SSRDFAFYNP…PHPDTQIHAE (402 aa)) form an interaction with FYN region. 2 disordered regions span residues 1801–1865 (PGKT…QSSL) and 1881–2002 (RAHQ…LERD). The segment covering 1826–1841 (GDERFYRKHPESEFDR) has biased composition (basic and acidic residues). A compositionally biased stretch (polar residues) spans 1850–1865 (STQAEKPSLPQKQSSL). Over residues 1881–1892 (RAHQEASHRQLC) the composition is skewed to basic and acidic residues. A compositionally biased stretch (polar residues) spans 1918 to 1939 (SEPSNYHNSGKYMTSGQGSLTL). Basic and acidic residues-rich tracts occupy residues 1940–1954 (NHKE…DRPR) and 1961–1975 (PEKH…EEHF). Arg-2039 carries the post-translational modification Omega-N-methylarginine.

The protein belongs to the PX domain-containing GAP family. In terms of assembly, interacts with NTRK1 (via cytoplasmic domain); the interaction is independent of the phosphorylation state of NTRK1. Interacts with SHC3 (via SH2 domain). Interacts with RASA1 (via SH3 domain); the interaction is necessary for the Ras activation and cell transforming activities of ARHGAP32. Interacts with GAB1 and GAB2. Interacts with CRK and CRKL. Found in a complex with CRKL and BCAR1; upon EGF stimulation BCAR1 may be replaced by EGFR. Interacts with NCK1 (via SH3 domain); NCK1 recruits phosphorylated BCAR1 to the complex. Isoform 2 interacts with FYN; the interaction appears to be dependent on tyrosine phosphorylation of ARHGAP32. Interacts with EGFR; the interaction requires EGF stimulation and is increased by SHC3. Interacts with CDC42; the interaction requires constitutively active CDC42. Interacts with CTNNB1, DLG4, CDH2 and GRIN2B. Interacts with GPHN. Isoform 2 is phosphorylated on multiple tyrosine residues by FYN. Phosphorylated tyrosine residues undergo dephosphorylation after stimulation of NMDA receptors. Phosphorylated in vitro by CaMK2 in the presence of calmodulin and calcium; which inhibits GAP activity. As to expression, isoform 1 and isoform 2 are highly expressed in brain, specially in cortex, corpus striatum, hippocampus and thalamus. Low levels in cerebellum, colon, small intestine, and kidney.

The protein localises to the postsynaptic density. The protein resides in the cell projection. It localises to the dendritic spine. Its subcellular location is the cytoplasm. It is found in the cell cortex. The protein localises to the endosome membrane. The protein resides in the golgi apparatus membrane. It localises to the endoplasmic reticulum membrane. Its subcellular location is the membrane. Its function is as follows. GTPase-activating protein (GAP) promoting GTP hydrolysis on RHOA, CDC42 and RAC1 small GTPases. May be involved in the differentiation of neuronal cells during the formation of neurite extensions. Involved in NMDA receptor activity-dependent actin reorganization in dendritic spines. May mediate cross-talks between Ras- and Rho-regulated signaling pathways in cell growth regulation. Isoform 2 has higher GAP activity. This Mus musculus (Mouse) protein is Rho GTPase-activating protein 32 (Arhgap32).